We begin with the raw amino-acid sequence, 125 residues long: L-fucose mutarotase (125 aa).

His-13 acts as the Proton donor in catalysis.

Belongs to the RbsD / FucU family. FucU mutarotase subfamily.

The catalysed reaction is alpha-L-fucose = beta-L-fucose. With respect to regulation, active toward L-galactopyranoside and D-arabinopyranoside but no D-fucopyranoside activity detected. In terms of biological role, plays a role in the catabolism of L-fucose. Involved in the anomeric conversion of L-fucose. The protein is L-fucose mutarotase of Xanthomonas campestris pv. campestris (strain ATCC 33913 / DSM 3586 / NCPPB 528 / LMG 568 / P 25).